An 85-amino-acid polypeptide reads, in one-letter code: Cell division protein ZapA (85 aa).

A coiled-coil region spans residues 59-85 (TAVNVVHDYMKLQEKYEILERQLKEKE).

The protein belongs to the ZapA family. Type 2 subfamily. Homodimer. Interacts with FtsZ.

Its subcellular location is the cytoplasm. Functionally, activator of cell division through the inhibition of FtsZ GTPase activity, therefore promoting FtsZ assembly into bundles of protofilaments necessary for the formation of the division Z ring. It is recruited early at mid-cell but it is not essential for cell division. This chain is Cell division protein ZapA, found in Bacillus velezensis (strain DSM 23117 / BGSC 10A6 / LMG 26770 / FZB42) (Bacillus amyloliquefaciens subsp. plantarum).